Reading from the N-terminus, the 495-residue chain is N-succinylglutamate 5-semialdehyde dehydrogenase (495 aa).

228–233 serves as a coordination point for NAD(+); that stretch reads GSYATG. Active-site residues include Glu-251 and Cys-285.

The protein belongs to the aldehyde dehydrogenase family. AstD subfamily.

It catalyses the reaction N-succinyl-L-glutamate 5-semialdehyde + NAD(+) + H2O = N-succinyl-L-glutamate + NADH + 2 H(+). It functions in the pathway amino-acid degradation; L-arginine degradation via AST pathway; L-glutamate and succinate from L-arginine: step 4/5. Catalyzes the NAD-dependent reduction of succinylglutamate semialdehyde into succinylglutamate. This is N-succinylglutamate 5-semialdehyde dehydrogenase from Legionella pneumophila (strain Corby).